The primary structure comprises 212 residues: Large ribosomal subunit protein uL3 (212 aa).

Positions 119–147 are disordered; it reads YQGNIKRWGQSRGPETHGSRYHRIPGSMG.

The protein belongs to the universal ribosomal protein uL3 family. As to quaternary structure, part of the 50S ribosomal subunit. Forms a cluster with proteins L14 and L19.

Functionally, one of the primary rRNA binding proteins, it binds directly near the 3'-end of the 23S rRNA, where it nucleates assembly of the 50S subunit. This chain is Large ribosomal subunit protein uL3, found in Lactobacillus acidophilus (strain ATCC 700396 / NCK56 / N2 / NCFM).